Reading from the N-terminus, the 459-residue chain is 1,3-beta-glucanosyltransferase gas2 (459 aa).

Positions 1–19 (MVSFTKFTLQLLSASAAFA) are cleaved as a signal peptide. 2 N-linked (GlcNAc...) asparagine glycosylation sites follow: asparagine 34 and asparagine 68. Cysteine 69 and cysteine 98 are oxidised to a cystine. Residue tyrosine 87 coordinates (1,3-beta-D-glucosyl)n. N-linked (GlcNAc...) asparagine glycosylation is found at asparagine 90, asparagine 104, and asparagine 146. 2 residues coordinate (1,3-beta-D-glucosyl)n: asparagine 155 and glutamate 156. Residue glutamate 156 is the Proton donor of the active site. Asparagine 160 is a glycosylation site (N-linked (GlcNAc...) asparagine). The (1,3-beta-D-glucosyl)n site is built by aspartate 197 and arginine 202. 2 cysteine pairs are disulfide-bonded: cysteine 211/cysteine 350 and cysteine 235/cysteine 266. Asparagine 212, asparagine 218, and asparagine 254 each carry an N-linked (GlcNAc...) asparagine glycan. The Nucleophile role is filled by glutamate 263. The N-linked (GlcNAc...) asparagine glycan is linked to asparagine 284. (1,3-beta-D-glucosyl)n is bound at residue tyrosine 295. N-linked (GlcNAc...) asparagine glycans are attached at residues asparagine 308, asparagine 334, asparagine 344, asparagine 354, and asparagine 370. Intrachain disulfides connect cysteine 374–cysteine 427, cysteine 383–cysteine 449, and cysteine 402–cysteine 409. Asparagine 423 carries an N-linked (GlcNAc...) asparagine glycan.

The protein belongs to the glycosyl hydrolase 72 family.

The protein resides in the endoplasmic reticulum lumen. The protein localises to the secreted. Functionally, splits internally a 1,3-beta-glucan molecule and transfers the newly generated reducing end (the donor) to the non-reducing end of another 1,3-beta-glucan molecule (the acceptor) forming a 1,3-beta linkage, resulting in the elongation of 1,3-beta-glucan chains in the cell wall. This chain is 1,3-beta-glucanosyltransferase gas2 (gas2), found in Schizosaccharomyces pombe (strain 972 / ATCC 24843) (Fission yeast).